The sequence spans 483 residues: Acyl-coenzyme A thioesterase 2, mitochondrial (483 aa).

K104 bears the N6-acetyllysine mark. Active-site charge relay system residues include S294, D388, and H422. N6-succinyllysine is present on K470. The short motif at 481-483 (SKV) is the Microbody targeting signal element.

It belongs to the C/M/P thioester hydrolase family. In terms of assembly, monomer. Strongest expression in heart, liver, muscle and kidney. Weak in placenta and pancreas.

It localises to the mitochondrion. The catalysed reaction is hexadecanoyl-CoA + H2O = hexadecanoate + CoA + H(+). The enzyme catalyses tetradecanoyl-CoA + H2O = tetradecanoate + CoA + H(+). It carries out the reaction octadecanoyl-CoA + H2O = octadecanoate + CoA + H(+). It catalyses the reaction eicosanoyl-CoA + H2O = eicosanoate + CoA + H(+). The catalysed reaction is decanoyl-CoA + H2O = decanoate + CoA + H(+). The enzyme catalyses dodecanoyl-CoA + H2O = dodecanoate + CoA + H(+). It carries out the reaction (9Z)-octadecenoyl-CoA + H2O = (9Z)-octadecenoate + CoA + H(+). It catalyses the reaction (9Z)-hexadecenoyl-CoA + H2O = (9Z)-hexadecenoate + CoA + H(+). The catalysed reaction is (9E)-octadecenoyl-CoA + H2O = (9E)-octadecenoate + CoA + H(+). The enzyme catalyses (9Z,12Z)-octadecadienoyl-CoA + H2O = (9Z,12Z)-octadecadienoate + CoA + H(+). It participates in lipid metabolism; fatty acid metabolism. Its function is as follows. Catalyzes the hydrolysis of acyl-CoAs into free fatty acids and coenzyme A (CoASH), regulating their respective intracellular levels. Displays higher activity toward long chain acyl CoAs (C14-C20). The enzyme is involved in enhancing the hepatic fatty acid oxidation in mitochondria. This is Acyl-coenzyme A thioesterase 2, mitochondrial (ACOT2) from Homo sapiens (Human).